Here is a 52-residue protein sequence, read N- to C-terminus: MHSTPLVSAALIFAYTLTSDRTPAHASCTHTMMRTVRHTFLHTNSTRAVLTL.

This is an uncharacterized protein from Treponema pallidum (strain Nichols).